Reading from the N-terminus, the 76-residue chain is Large ribosomal subunit protein uL30 (76 aa).

Belongs to the universal ribosomal protein uL30 family. As to quaternary structure, part of the 50S ribosomal subunit.

The protein is Large ribosomal subunit protein uL30 of Anaeromyxobacter dehalogenans (strain 2CP-1 / ATCC BAA-258).